Consider the following 294-residue polypeptide: Ribosomal RNA small subunit methyltransferase A (294 aa).

Residues asparagine 31, leucine 33, glycine 58, glutamate 79, aspartate 111, and asparagine 136 each coordinate S-adenosyl-L-methionine.

Belongs to the class I-like SAM-binding methyltransferase superfamily. rRNA adenine N(6)-methyltransferase family. RsmA subfamily.

It localises to the cytoplasm. The catalysed reaction is adenosine(1518)/adenosine(1519) in 16S rRNA + 4 S-adenosyl-L-methionine = N(6)-dimethyladenosine(1518)/N(6)-dimethyladenosine(1519) in 16S rRNA + 4 S-adenosyl-L-homocysteine + 4 H(+). Its function is as follows. Specifically dimethylates two adjacent adenosines (A1518 and A1519) in the loop of a conserved hairpin near the 3'-end of 16S rRNA in the 30S particle. May play a critical role in biogenesis of 30S subunits. This Lactobacillus acidophilus (strain ATCC 700396 / NCK56 / N2 / NCFM) protein is Ribosomal RNA small subunit methyltransferase A.